A 256-amino-acid polypeptide reads, in one-letter code: Hydroxyacylglutathione hydrolase (256 aa).

Zn(2+) is bound by residues histidine 53, histidine 55, aspartate 57, histidine 58, histidine 111, aspartate 128, and histidine 166.

This sequence belongs to the metallo-beta-lactamase superfamily. Glyoxalase II family. In terms of assembly, monomer. Zn(2+) is required as a cofactor.

The enzyme catalyses an S-(2-hydroxyacyl)glutathione + H2O = a 2-hydroxy carboxylate + glutathione + H(+). It participates in secondary metabolite metabolism; methylglyoxal degradation; (R)-lactate from methylglyoxal: step 2/2. In terms of biological role, thiolesterase that catalyzes the hydrolysis of S-D-lactoyl-glutathione to form glutathione and D-lactic acid. This Thiobacillus denitrificans (strain ATCC 25259 / T1) protein is Hydroxyacylglutathione hydrolase.